We begin with the raw amino-acid sequence, 122 residues long: Large ribosomal subunit protein eL18 (122 aa).

It belongs to the eukaryotic ribosomal protein eL18 family.

The chain is Large ribosomal subunit protein eL18 from Thermoplasma volcanium (strain ATCC 51530 / DSM 4299 / JCM 9571 / NBRC 15438 / GSS1).